The primary structure comprises 102 residues: NADH-quinone oxidoreductase subunit K (102 aa).

The next 3 helical transmembrane spans lie at 5 to 25 (LGHF…GIFL), 31 to 51 (IVLL…FVAF), and 62 to 82 (IFVF…LAIL).

The protein belongs to the complex I subunit 4L family. In terms of assembly, NDH-1 is composed of 14 different subunits. Subunits NuoA, H, J, K, L, M, N constitute the membrane sector of the complex.

It localises to the cell inner membrane. The enzyme catalyses a quinone + NADH + 5 H(+)(in) = a quinol + NAD(+) + 4 H(+)(out). In terms of biological role, NDH-1 shuttles electrons from NADH, via FMN and iron-sulfur (Fe-S) centers, to quinones in the respiratory chain. The immediate electron acceptor for the enzyme in this species is believed to be ubiquinone. Couples the redox reaction to proton translocation (for every two electrons transferred, four hydrogen ions are translocated across the cytoplasmic membrane), and thus conserves the redox energy in a proton gradient. This chain is NADH-quinone oxidoreductase subunit K, found in Albidiferax ferrireducens (strain ATCC BAA-621 / DSM 15236 / T118) (Rhodoferax ferrireducens).